The chain runs to 314 residues: 2,3-dihydroxyphenylpropionate/2,3-dihydroxicinnamic acid 1,2-dioxygenase (314 aa).

His-115 (proton donor) is an active-site residue. His-179 functions as the Proton acceptor in the catalytic mechanism.

Belongs to the LigB/MhpB extradiol dioxygenase family. As to quaternary structure, homotetramer. The cofactor is Fe(2+).

The enzyme catalyses 3-(2,3-dihydroxyphenyl)propanoate + O2 = (2Z,4E)-2-hydroxy-6-oxonona-2,4-dienedioate + H(+). The catalysed reaction is (2E)-3-(2,3-dihydroxyphenyl)prop-2-enoate + O2 = (2Z,4E,7E)-2-hydroxy-6-oxonona-2,4,7-trienedioate + H(+). The protein operates within aromatic compound metabolism; 3-phenylpropanoate degradation. In terms of biological role, catalyzes the non-heme iron(II)-dependent oxidative cleavage of 2,3-dihydroxyphenylpropionic acid and 2,3-dihydroxicinnamic acid into 2-hydroxy-6-ketononadienedioate and 2-hydroxy-6-ketononatrienedioate, respectively. The polypeptide is 2,3-dihydroxyphenylpropionate/2,3-dihydroxicinnamic acid 1,2-dioxygenase (Escherichia coli O157:H7).